The primary structure comprises 306 residues: tRNA (guanine-N(7)-)-methyltransferase (306 aa).

Polar residues predominate over residues 1–19 (MSSTAPLDSKATEQITTAA). Positions 1–65 (MSSTAPLDSK…EASPELPSDE (65 aa)) are disordered. Residues Gly-121, 144-145 (EI), 180-181 (NA), and Cys-200 each bind S-adenosyl-L-methionine. Asp-203 is a catalytic residue. 278-280 (TEE) lines the S-adenosyl-L-methionine pocket.

Belongs to the class I-like SAM-binding methyltransferase superfamily. TrmB family. As to quaternary structure, forms a complex with TRM82.

The protein resides in the nucleus. It catalyses the reaction guanosine(46) in tRNA + S-adenosyl-L-methionine = N(7)-methylguanosine(46) in tRNA + S-adenosyl-L-homocysteine. It functions in the pathway tRNA modification; N(7)-methylguanine-tRNA biosynthesis. Its function is as follows. Catalyzes the formation of N(7)-methylguanine at position 46 (m7G46) in tRNA. The protein is tRNA (guanine-N(7)-)-methyltransferase of Lodderomyces elongisporus (strain ATCC 11503 / CBS 2605 / JCM 1781 / NBRC 1676 / NRRL YB-4239) (Yeast).